Here is a 432-residue protein sequence, read N- to C-terminus: Serine hydroxymethyltransferase 1 (432 aa).

Residues L131 and 135 to 137 (GHL) each bind (6S)-5,6,7,8-tetrahydrofolate. K240 is subject to N6-(pyridoxal phosphate)lysine.

Belongs to the SHMT family. Homodimer. Requires pyridoxal 5'-phosphate as cofactor.

The protein localises to the cytoplasm. It catalyses the reaction (6R)-5,10-methylene-5,6,7,8-tetrahydrofolate + glycine + H2O = (6S)-5,6,7,8-tetrahydrofolate + L-serine. It functions in the pathway one-carbon metabolism; tetrahydrofolate interconversion. It participates in amino-acid biosynthesis; glycine biosynthesis; glycine from L-serine: step 1/1. In terms of biological role, catalyzes the reversible interconversion of serine and glycine with tetrahydrofolate (THF) serving as the one-carbon carrier. This reaction serves as the major source of one-carbon groups required for the biosynthesis of purines, thymidylate, methionine, and other important biomolecules. Also exhibits THF-independent aldolase activity toward beta-hydroxyamino acids, producing glycine and aldehydes, via a retro-aldol mechanism. This chain is Serine hydroxymethyltransferase 1, found in Rhodopseudomonas palustris (strain ATCC BAA-98 / CGA009).